We begin with the raw amino-acid sequence, 239 residues long: tRNA (guanine-N(7)-)-methyltransferase (239 aa).

Residues Glu68, Glu93, Asp120, and Asp143 each coordinate S-adenosyl-L-methionine. Asp143 is a catalytic residue. Residues Lys147, Asp180, and 217–220 (TKFE) contribute to the substrate site.

This sequence belongs to the class I-like SAM-binding methyltransferase superfamily. TrmB family.

It catalyses the reaction guanosine(46) in tRNA + S-adenosyl-L-methionine = N(7)-methylguanosine(46) in tRNA + S-adenosyl-L-homocysteine. Its pathway is tRNA modification; N(7)-methylguanine-tRNA biosynthesis. Its function is as follows. Catalyzes the formation of N(7)-methylguanine at position 46 (m7G46) in tRNA. This is tRNA (guanine-N(7)-)-methyltransferase from Vibrio cholerae serotype O1 (strain ATCC 39541 / Classical Ogawa 395 / O395).